Here is a 521-residue protein sequence, read N- to C-terminus: MAP kinase-activated protein kinase mak-1 (521 aa).

Positions 1–12 (MMFEYEEDEDPM) are enriched in acidic residues. Residues 1–36 (MMFEYEEDEDPMEQQKHEEFKHHSTDHSGSPQENPF) are disordered. Residues 13 to 26 (EQQKHEEFKHHSTD) show a composition bias toward basic and acidic residues. Residues 144-405 (TISAEIIGIG…IHELMATPLV (262 aa)) form the Protein kinase domain. Residues 150-158 (IGIGESGKV) and K173 contribute to the ATP site. D266 serves as the catalytic Proton acceptor.

Belongs to the protein kinase superfamily. CAMK Ser/Thr protein kinase family. May interact (via protein kinase domain) with unc-22 (via protein kinase and CRD domains). Mg(2+) is required as a cofactor. In terms of processing, autophosphorylated in vitro. As to expression, expressed in body wall muscles (at protein level). Expressed in intestine.

The protein resides in the cytoplasm. It localises to the myofibril. The protein localises to the sarcomere. Its subcellular location is the a band. It catalyses the reaction L-seryl-[protein] + ATP = O-phospho-L-seryl-[protein] + ADP + H(+). The catalysed reaction is L-threonyl-[protein] + ATP = O-phospho-L-threonyl-[protein] + ADP + H(+). Serine/threonine-protein kinase which may play a role in body wall muscle contraction. May phosphorylate unc-22/twitchin. This chain is MAP kinase-activated protein kinase mak-1, found in Caenorhabditis elegans.